Reading from the N-terminus, the 246-residue chain is UDP-N-acetyl-D-mannosaminuronic acid transferase (246 aa).

It belongs to the glycosyltransferase 26 family.

It catalyses the reaction UDP-N-acetyl-alpha-D-mannosaminouronate + N-acetyl-alpha-D-glucosaminyl-di-trans,octa-cis-undecaprenyl diphosphate = beta-D-ManNAcA-(1-&gt;4)-alpha-D-GlcNAc-di-trans,octa-cis-undecaprenyl diphosphate + UDP + H(+). It participates in bacterial outer membrane biogenesis; enterobacterial common antigen biosynthesis. Catalyzes the synthesis of Und-PP-GlcNAc-ManNAcA (Lipid II), the second lipid-linked intermediate involved in enterobacterial common antigen (ECA) synthesis. The chain is UDP-N-acetyl-D-mannosaminuronic acid transferase from Citrobacter koseri (strain ATCC BAA-895 / CDC 4225-83 / SGSC4696).